A 302-amino-acid polypeptide reads, in one-letter code: Nucleotide-binding protein Rsph17025_2562 (302 aa).

15–22 (GPSGAGRT) serves as a coordination point for ATP. 62 to 65 (DVRN) contacts GTP.

The protein belongs to the RapZ-like family.

Displays ATPase and GTPase activities. The sequence is that of Nucleotide-binding protein Rsph17025_2562 from Cereibacter sphaeroides (strain ATCC 17025 / ATH 2.4.3) (Rhodobacter sphaeroides).